The following is a 575-amino-acid chain: Transcription factor COE2 (575 aa).

The interaction with DNA stretch occupies residues 62-65 (RKSN). Residues 150–169 (CRVLLTHEVMCSRCCEKKSC) form a C5-type zinc finger. 2 interaction with DNA regions span residues 196-203 (NCLKTAGN) and 235-238 (NNSK). The IPT/TIG domain occupies 253–336 (PCIKAISPSE…KGAPGRFIYT (84 aa)). Residues 441–453 (STQGNNQGYIRNT) are compositionally biased toward polar residues. Positions 441–479 (STQGNNQGYIRNTSSISPRGYSSSSTPQQSNYSTSSNSM) are disordered. Over residues 454-479 (SSISPRGYSSSSTPQQSNYSTSSNSM) the composition is skewed to low complexity.

Belongs to the COE family. In terms of assembly, forms either a homodimer or a heterodimer with a related family member. Interacts with SIX1.

It is found in the nucleus. In terms of biological role, transcription factor that, in osteoblasts, activates the decoy receptor for RANKL, TNFRSF11B, which in turn regulates osteoclast differentiation. Acts in synergy with the Wnt-responsive LEF1/CTNNB1 pathway. Recognizes variations of the palindromic sequence 5'-ATTCCCNNGGGAATT-3'. In Bos taurus (Bovine), this protein is Transcription factor COE2 (EBF2).